Reading from the N-terminus, the 380-residue chain is Flap endonuclease 1-A (380 aa).

Positions 1–105 (MGIKGLTKLL…QELAKRYSKR (105 aa)) are N-domain. A Mg(2+)-binding site is contributed by Asp-34. Arg-71 provides a ligand contact to DNA. Positions 87, 159, 161, 180, and 182 each coordinate Mg(2+). Residues 123–254 (AIEKFSKRTV…QTALKLIRQH (132 aa)) are I-domain. Glu-159 contacts DNA. 2 residues coordinate DNA: Gly-232 and Asp-234. Asp-234 is a Mg(2+) binding site. Residues 336–344 (SQGRLESFF) form an interaction with PCNA region. The segment at 351–380 (SVPLKRKDTSEKPTKAVANKKTKGAGGKKK) is disordered. The span at 355–364 (KRKDTSEKPT) shows a compositional bias: basic and acidic residues. Positions 368 to 380 (ANKKTKGAGGKKK) are enriched in basic residues.

Belongs to the XPG/RAD2 endonuclease family. FEN1 subfamily. In terms of assembly, interacts with PCNA. Three molecules of FEN1 bind to one PCNA trimer with each molecule binding to one PCNA monomer. PCNA stimulates the nuclease activity without altering cleavage specificity. Mg(2+) is required as a cofactor. In terms of processing, phosphorylated. Phosphorylation upon DNA damage induces relocalization to the nuclear plasma. Strongly expressed in proliferating tissues: root and shoot apical meristem, tiller bud, leaf, ligule primordia, marginal meristem of young leaves and panicles. Not expressed in mature leaves when exposed to UV.

The protein resides in the nucleus. It localises to the nucleolus. Its subcellular location is the nucleoplasm. The protein localises to the mitochondrion. Inhibited by NaCl. Structure-specific nuclease with 5'-flap endonuclease and 5'-3' exonuclease activities involved in DNA replication and repair. During DNA replication, cleaves the 5'-overhanging flap structure that is generated by displacement synthesis when DNA polymerase encounters the 5'-end of a downstream Okazaki fragment. It enters the flap from the 5'-end and then tracks to cleave the flap base, leaving a nick for ligation. Also involved in the long patch base excision repair (LP-BER) pathway, by cleaving within the apurinic/apyrimidinic (AP) site-terminated flap. Acts as a genome stabilization factor that prevents flaps from equilibrating into structures that lead to duplications and deletions. Also possesses 5'-3' exonuclease activity on nicked or gapped double-stranded DNA, and exhibits RNase H activity. Also involved in replication and repair of rDNA and in repairing mitochondrial DNA. May be required for cell proliferation. The chain is Flap endonuclease 1-A from Oryza sativa subsp. japonica (Rice).